Here is a 232-residue protein sequence, read N- to C-terminus: Large ribosomal subunit protein uL1 (232 aa).

This sequence belongs to the universal ribosomal protein uL1 family. In terms of assembly, part of the 50S ribosomal subunit.

Its function is as follows. Binds directly to 23S rRNA. The L1 stalk is quite mobile in the ribosome, and is involved in E site tRNA release. In terms of biological role, protein L1 is also a translational repressor protein, it controls the translation of the L11 operon by binding to its mRNA. The sequence is that of Large ribosomal subunit protein uL1 from Xanthomonas campestris pv. campestris (strain B100).